A 565-amino-acid chain; its full sequence is Deformed epidermal autoregulatory factor 1 homolog (565 aa).

Disordered regions lie at residues 34–62 (GGEAEEPVLSRDEDSEEDADSEAERETPR) and 162–190 (GLKGPAAPLTPGPQSPPTPLAPGQEKGGT). Pro residues predominate over residues 169 to 181 (PLTPGPQSPPTPL). Threonine 171 bears the Phosphothreonine mark. Position 176 is a phosphoserine (serine 176). The residue at position 179 (threonine 179) is a Phosphothreonine. The 81-residue stretch at 193–273 (NWDPSVYDSE…QCLIQDGILN (81 aa)) folds into the SAND domain. Positions 301–316 (KRRKKENELPTTPVKK) match the Nuclear localization signal motif. An interaction with LMO4 region spans residues 403–478 (IAPFPEAALP…QLKTLFEQAK (76 aa)). Threonine 432 is subject to Phosphothreonine. Position 448 is a phosphoserine (serine 448). Residues cysteine 504, cysteine 507, cysteine 515, cysteine 518, cysteine 524, cysteine 528, histidine 536, and cysteine 540 each contribute to the Zn(2+) site. Residues 504–540 (CVNCGREAMNECTGCHKVNYCSTFCQRKDWKDHQHIC) form an MYND-type zinc finger.

Homodimer. Interacts with LMO4; LMO4 blocks export from nucleus. Interacts with LMO2 and CLIM2. May interact with the corepressors NCOR1 and NCRO2. Identified in a complex with XRCC5 and XRCC6. Interacts (via the SAND domain) with the DNA-PK complex subunit XRCC6; the interaction is direct and may be inhibited by DNA-binding. Post-translationally, may be phosphorylated by DNA-PK complex in a DNA independent manner (in vitro).

It is found in the nucleus. In terms of biological role, transcription factor that binds to sequence with multiple copies of 5'-TTC[CG]G-3' present in its own promoter and that of the HNRPA2B1 gene. Down-regulates transcription of these genes. Binds to the retinoic acid response element (RARE) 5'-AGGGTTCACCGAAAGTTCA-3'. Activates the proenkephalin gene independently of promoter binding, probably through protein-protein interaction. Regulates epithelial cell proliferation and side-branching in the mammary gland. Required for neural tube closure and skeletal patterning. Controls the expression of peripheral tissue antigens in pancreatic lymph nodes. Transcriptional activator of EIF4G3. May also involved in behavior. The chain is Deformed epidermal autoregulatory factor 1 homolog (DEAF1) from Pan troglodytes (Chimpanzee).